A 618-amino-acid chain; its full sequence is Prothrombin (618 aa).

An N-terminal signal peptide occupies residues 1–24; the sequence is MSHVRGLGLPGCLALAALVSLVHS. A propeptide spanning residues 25 to 43 is cleaved from the precursor; sequence QHVFLAPQQALSLLQRVRR. In terms of domain architecture, Gla spans 44-90; the sequence is ANSGFLEELRKGNLERECVEEQCSYEEAFEALESPQDTDVFWAKYTV. 4-carboxyglutamate occurs at positions 50, 51, 58, 60, 63, 64, 69, 70, 73, and 76. The cysteines at positions 61 and 66 are disulfide-linked. 10 disulfide bridges follow: Cys91-Cys104, Cys109-Cys187, Cys130-Cys170, Cys158-Cys182, Cys215-Cys293, Cys236-Cys276, Cys264-Cys288, Cys333-Cys479, Cys388-Cys404, and Cys533-Cys547. Kringle domains follow at residues 109–187 and 215–292; these read CAMD…VPVC and CLTE…NLNY. N-linked (GlcNAc...) asparagine glycosylation is found at Asn122 and Asn144. A Peptidase S1 domain is found at 361–615; it reads IVEGWDAEKG…LKRWIQKVID (255 aa). The Charge relay system role is filled by His403. An N-linked (GlcNAc...) asparagine glycan is attached at Asn413. Asp459 serves as the catalytic Charge relay system. The segment at 548–570 is high affinity receptor-binding region which is also known as the TP508 peptide; sequence AGFKVNDTKRGDACEGDSGGPFV. N-linked (GlcNAc...) asparagine glycosylation is present at Asn553. A disulfide bridge connects residues Cys561 and Cys591. Ser565 serves as the catalytic Charge relay system.

The protein belongs to the peptidase S1 family. As to quaternary structure, heterodimer (named alpha-thrombin) of a light and a heavy chain; disulfide-linked. Forms a heterodimer with SERPINA5. In plasma, interacts (via N-terminus) with alpha-1-microglobulin; this interaction does not prevent the activation of prothrombin to thrombin. The gamma-carboxyglutamyl residues, which bind calcium ions, result from the carboxylation of glutamyl residues by a microsomal enzyme, the vitamin K-dependent carboxylase. The modified residues are necessary for the calcium-dependent interaction with a negatively charged phospholipid surface, which is essential for the conversion of prothrombin to thrombin. Post-translationally, in the penultimate step of the coagulation cascade, prothrombin is converted to thrombin by the prothrombinase complex composed of factor Xa (F10), cofactor Va (F5), and phospholipids. This activation requires factor Xa-catalyzed sequential cleavage at 2 sites, Arg-311 and Arg-360, along 2 possible pathways. In the first pathway, the first cleavage occurs at Arg-311, leading to the formation of the inactive intermediate prethrombin-2. This pathway preferentially occurs on platelets and in the absence of cofactor Va. In the second pathway, the first cleavage occurs at Arg-360, which separates protease domain into 2 chains that remain connected through a disulfide bond and generates the active intermediate meizothrombin. The presence of cofactor Va directs activation along the meizothrombin pathway and greatly accelerates the rate of cleavage at Arg-360, but has a smaller effect on the cleavage of meizothrombin at Arg-311. Meizothrombin accumulates as an intermediate when prothrombinase is assembled on the membrane of red blood cells.

It carries out the reaction Selective cleavage of Arg-|-Gly bonds in fibrinogen to form fibrin and release fibrinopeptides A and B.. With respect to regulation, activity is promoted in the presence of negatively charged surfaces, such as polyphosphate and dextran sulfate. Inhibited by SERPINA5. In terms of biological role, thrombin, which cleaves bonds after Arg and Lys, converts fibrinogen to fibrin and activates factors V, VII, VIII, XIII, and, in complex with thrombomodulin, protein C. Functions in blood homeostasis, inflammation and wound healing. Activates coagulation factor XI (F11); activation is promoted by the contact with negatively charged surfaces. Triggers the production of pro-inflammatory cytokines, such as MCP-1/CCL2 and IL8/CXCL8, in endothelial cells. The chain is Prothrombin (F2) from Mus musculus (Mouse).